The primary structure comprises 95 residues: Large ribosomal subunit protein bL28 (95 aa).

The protein belongs to the bacterial ribosomal protein bL28 family.

This Zymomonas mobilis subsp. mobilis (strain ATCC 31821 / ZM4 / CP4) protein is Large ribosomal subunit protein bL28.